A 497-amino-acid polypeptide reads, in one-letter code: Probable cytosol aminopeptidase (497 aa).

Mn(2+) is bound by residues K267 and D272. Residue K279 is part of the active site. Mn(2+)-binding residues include D290, D349, and E351. Residue R353 is part of the active site.

The protein belongs to the peptidase M17 family. Requires Mn(2+) as cofactor.

The protein resides in the cytoplasm. It carries out the reaction Release of an N-terminal amino acid, Xaa-|-Yaa-, in which Xaa is preferably Leu, but may be other amino acids including Pro although not Arg or Lys, and Yaa may be Pro. Amino acid amides and methyl esters are also readily hydrolyzed, but rates on arylamides are exceedingly low.. It catalyses the reaction Release of an N-terminal amino acid, preferentially leucine, but not glutamic or aspartic acids.. Its function is as follows. Presumably involved in the processing and regular turnover of intracellular proteins. Catalyzes the removal of unsubstituted N-terminal amino acids from various peptides. The polypeptide is Probable cytosol aminopeptidase (Pseudomonas entomophila (strain L48)).